The chain runs to 377 residues: Compound eye opsin BCRH1 (377 aa).

The Extracellular segment spans residues 1-53 (MANVTGPQMAFYGSGAATFGYPEGMTVADFVPDRVKHMVLDHWYNYPPVNPMW). Residue asparagine 3 is glycosylated (N-linked (GlcNAc...) asparagine). Residues 54–78 (HYLLGVVYLFLGVISIAGNGLVIYL) form a helical membrane-spanning segment. Topologically, residues 79–90 (YMKSQALKTPAN) are cytoplasmic. Residues 91 to 115 (MLIVNLALSDLIMLTTNFPPFCYNC) traverse the membrane as a helical segment. The Extracellular portion of the chain corresponds to 116-131 (FSGGRWMFSGTYCEIY). Cysteine 128 and cysteine 205 are joined by a disulfide. A helical membrane pass occupies residues 132 to 151 (AALGAITGVCSIWTLCMISF). Over 152–170 (DRYNIICNGFNGPKLTQGK) the chain is Cytoplasmic. The helical transmembrane segment at 171 to 194 (ATFMCGLAWVISVGWSLPPFFGWG) threads the bilayer. Over 195-218 (SYTLEGILDSCSYDYFTRDMNTIT) the chain is Extracellular. Residues 219–246 (YNICIFIFDFFLPASVIVFSYVFIVKAI) form a helical membrane-spanning segment. Residues 247-281 (FAHEAAMRAQAKKMNVTNLRSNEAETQRAEIRIAK) lie on the Cytoplasmic side of the membrane. The chain crosses the membrane as a helical span at residues 282 to 305 (TALVNVSLWFICWTPYAAITIQGL). At 306-313 (LGNAEGIT) the chain is on the extracellular side. A helical membrane pass occupies residues 314-338 (PLLTTLPALLAKSCSCYNPFVYAIS). At lysine 325 the chain carries N6-(retinylidene)lysine. The Cytoplasmic portion of the chain corresponds to 339-377 (HPKFRLAITQHLPWFCVHEKDPNDVEENQSSNTQTQEKS).

It belongs to the G-protein coupled receptor 1 family. Opsin subfamily. Post-translationally, phosphorylated on some or all of the serine and threonine residues present in the C-terminal region. Expressed in all of the seven retinular cells (R1-R7) forming the main rhabdom in each ommatidium.

Its subcellular location is the membrane. Functionally, visual pigments are the light-absorbing molecules that mediate vision. They consist of an apoprotein, opsin, covalently linked to cis-retinal. This opsin produces visual pigments with maximal absorption in the blue-green region of the spectrum. This Hemigrapsus sanguineus (Asian shore crab) protein is Compound eye opsin BCRH1.